The following is a 262-amino-acid chain: 3-methyl-2-oxobutanoate hydroxymethyltransferase (262 aa).

The Mg(2+) site is built by Asp44 and Asp83. Residues 44–45 (DS), Asp83, and Lys111 each bind 3-methyl-2-oxobutanoate. Glu113 lines the Mg(2+) pocket. Glu180 acts as the Proton acceptor in catalysis.

It belongs to the PanB family. Homodecamer; pentamer of dimers. Mg(2+) serves as cofactor.

Its subcellular location is the cytoplasm. The enzyme catalyses 3-methyl-2-oxobutanoate + (6R)-5,10-methylene-5,6,7,8-tetrahydrofolate + H2O = 2-dehydropantoate + (6S)-5,6,7,8-tetrahydrofolate. It participates in cofactor biosynthesis; (R)-pantothenate biosynthesis; (R)-pantoate from 3-methyl-2-oxobutanoate: step 1/2. Its function is as follows. Catalyzes the reversible reaction in which hydroxymethyl group from 5,10-methylenetetrahydrofolate is transferred onto alpha-ketoisovalerate to form ketopantoate. This Alcanivorax borkumensis (strain ATCC 700651 / DSM 11573 / NCIMB 13689 / SK2) protein is 3-methyl-2-oxobutanoate hydroxymethyltransferase.